Reading from the N-terminus, the 67-residue chain is Beta-defensin 14 (67 aa).

Positions M1 to A22 are cleaved as a signal peptide. Intrachain disulfides connect C33–C62, C40–C55, and C45–C63.

This sequence belongs to the beta-defensin family.

The protein resides in the secreted. Functionally, has antibacterial activity. The chain is Beta-defensin 14 (Defb14) from Mus musculus (Mouse).